An 881-amino-acid polypeptide reads, in one-letter code: Alanine--tRNA ligase (881 aa).

Positions 565, 569, 672, and 676 each coordinate Zn(2+).

Belongs to the class-II aminoacyl-tRNA synthetase family. Zn(2+) serves as cofactor.

Its subcellular location is the cytoplasm. The enzyme catalyses tRNA(Ala) + L-alanine + ATP = L-alanyl-tRNA(Ala) + AMP + diphosphate. Catalyzes the attachment of alanine to tRNA(Ala) in a two-step reaction: alanine is first activated by ATP to form Ala-AMP and then transferred to the acceptor end of tRNA(Ala). Also edits incorrectly charged Ser-tRNA(Ala) and Gly-tRNA(Ala) via its editing domain. This Novosphingobium aromaticivorans (strain ATCC 700278 / DSM 12444 / CCUG 56034 / CIP 105152 / NBRC 16084 / F199) protein is Alanine--tRNA ligase.